Here is a 99-residue protein sequence, read N- to C-terminus: Aspartyl/glutamyl-tRNA(Asn/Gln) amidotransferase subunit C (99 aa).

It belongs to the GatC family. In terms of assembly, heterotrimer of A, B and C subunits.

The catalysed reaction is L-glutamyl-tRNA(Gln) + L-glutamine + ATP + H2O = L-glutaminyl-tRNA(Gln) + L-glutamate + ADP + phosphate + H(+). The enzyme catalyses L-aspartyl-tRNA(Asn) + L-glutamine + ATP + H2O = L-asparaginyl-tRNA(Asn) + L-glutamate + ADP + phosphate + 2 H(+). Functionally, allows the formation of correctly charged Asn-tRNA(Asn) or Gln-tRNA(Gln) through the transamidation of misacylated Asp-tRNA(Asn) or Glu-tRNA(Gln) in organisms which lack either or both of asparaginyl-tRNA or glutaminyl-tRNA synthetases. The reaction takes place in the presence of glutamine and ATP through an activated phospho-Asp-tRNA(Asn) or phospho-Glu-tRNA(Gln). The polypeptide is Aspartyl/glutamyl-tRNA(Asn/Gln) amidotransferase subunit C (Mycolicibacterium smegmatis (strain ATCC 700084 / mc(2)155) (Mycobacterium smegmatis)).